A 454-amino-acid polypeptide reads, in one-letter code: Metalloprotease MTH_856 (454 aa).

Residues 92–115 form a disordered region; sequence QVGSGAPSVDKTMVRSSRPPSDVP.

The protein belongs to the peptidase U62 family.

Probable metalloprotease. The sequence is that of Metalloprotease MTH_856 from Methanothermobacter thermautotrophicus (strain ATCC 29096 / DSM 1053 / JCM 10044 / NBRC 100330 / Delta H) (Methanobacterium thermoautotrophicum).